A 263-amino-acid chain; its full sequence is Chromosomal replication initiator protein DnaA (263 aa).

Position 1 (D1) is a region of interest, domain I, interacts with DnaA modulators. Position 1 (D1) is a region of interest, domain II. Residues 1–177 form a domain III, AAA+ region region; that stretch reads DSGLGKTHLL…GIINKIEFSI (177 aa). G3, G5, K6, and T7 together coordinate ATP. Positions 178 to 263 are domain IV, binds dsDNA; sequence IQDNSAAPKI…KNYSEIGVAF (86 aa).

Belongs to the DnaA family. Oligomerizes as a right-handed, spiral filament on DNA at oriC.

It is found in the cytoplasm. In terms of biological role, plays an essential role in the initiation and regulation of chromosomal replication. ATP-DnaA binds to the origin of replication (oriC) to initiate formation of the DNA replication initiation complex once per cell cycle. Binds the DnaA box (a 9 base pair repeat at the origin) and separates the double-stranded (ds)DNA. Forms a right-handed helical filament on oriC DNA; dsDNA binds to the exterior of the filament while single-stranded (ss)DNA is stabiized in the filament's interior. The ATP-DnaA-oriC complex binds and stabilizes one strand of the AT-rich DNA unwinding element (DUE), permitting loading of DNA polymerase. After initiation quickly degrades to an ADP-DnaA complex that is not apt for DNA replication. Binds acidic phospholipids. This chain is Chromosomal replication initiator protein DnaA, found in Spiroplasma apis.